The sequence spans 549 residues: Leucine-rich repeat, immunoglobulin-like domain and transmembrane domain-containing protein 2 (549 aa).

Positions 1–22 (MAFVFYCFLQVLVSWVIHAVQP) are cleaved as a signal peptide. The region spanning 23–54 (FCLPECTCSEESFGRSLQCMSMSLGKIPDNFP) is the LRRNT domain. LRR repeat units lie at residues 80–103 (SLEY…EDLP), 104–125 (ELRE…AFRA), 128–149 (LLRV…ALQF), and 152–173 (NLIY…VFLN). Asparagine 90 carries an N-linked (GlcNAc...) asparagine glycan. The region spanning 200–252 (NPWLCDCRLRGLAQFVKSVGPPFILVNSYLVCQGPVSKAGQLLHETELGVCMK) is the LRRCT domain. The region spanning 253–339 (PTISTPSVNV…FNSIGRSSLV (87 aa)) is the Ig-like domain. Asparagine 261 is a glycosylation site (N-linked (GlcNAc...) asparagine). Residues cysteine 274 and cysteine 327 are joined by a disulfide bond. In terms of domain architecture, Fibronectin type-III spans 361–447 (EVSAYVDLRV…QPPSQGQCVV (87 aa)). A helical membrane pass occupies residues 463 to 483 (LLHVTVVLCAVLLALPVGAYV). N-linked (GlcNAc...) asparagine glycosylation is present at asparagine 491. Positions 521–549 (FKDPSGVYEDGESHRVMEEDEEVEKEGIS) are disordered. Positions 538–549 (EEDEEVEKEGIS) are enriched in acidic residues.

As to quaternary structure, interacts with LRIT1; may form a heterodimer with LRIT1.

Its subcellular location is the membrane. In Mus musculus (Mouse), this protein is Leucine-rich repeat, immunoglobulin-like domain and transmembrane domain-containing protein 2 (Lrit2).